Here is a 339-residue protein sequence, read N- to C-terminus: UPF0324 membrane protein M6_Spy0799 (339 aa).

The next 9 helical transmembrane spans lie at 7–24 (KLPG…AWYL), 28–50 (FPII…FYEH), 57–79 (GISF…GLNL), 84–106 (AVGM…VAYG), 118–140 (ATLV…APVI), 150–172 (AISV…GQLL), 256–275 (FILF…SLGV), 290–307 (FIVM…LVKL), and 314–336 (AILL…QLSL).

It belongs to the UPF0324 family.

The protein resides in the cell membrane. This chain is UPF0324 membrane protein M6_Spy0799, found in Streptococcus pyogenes serotype M6 (strain ATCC BAA-946 / MGAS10394).